Here is a 275-residue protein sequence, read N- to C-terminus: Large ribosomal subunit protein uL2 (275 aa).

The segment at 216–275 is disordered; the sequence is GIRPQTRGSAMNPIDHPHGGGEGKTNSGRHPVTPWGMPTKGYKTRKKKASDKLIISKRKK. Over residues 257–275 the composition is skewed to basic residues; it reads YKTRKKKASDKLIISKRKK.

Belongs to the universal ribosomal protein uL2 family. In terms of assembly, part of the 50S ribosomal subunit. Forms a bridge to the 30S subunit in the 70S ribosome.

In terms of biological role, one of the primary rRNA binding proteins. Required for association of the 30S and 50S subunits to form the 70S ribosome, for tRNA binding and peptide bond formation. It has been suggested to have peptidyltransferase activity; this is somewhat controversial. Makes several contacts with the 16S rRNA in the 70S ribosome. This is Large ribosomal subunit protein uL2 from Aliarcobacter butzleri (strain RM4018) (Arcobacter butzleri).